The primary structure comprises 488 residues: Inositol 1,3,4-trisphosphate 5/6-kinase 4 (488 aa).

Lys-208 and Lys-224 together coordinate 1D-myo-inositol 1,3,4-trisphosphate. The 243-residue stretch at 246–488 (NACAIVDPIR…RFDQHVQEKH (243 aa)) folds into the ATP-grasp domain. Positions 263 and 315 each coordinate ATP. 1D-myo-inositol 1,3,4-trisphosphate-binding residues include His-326 and Lys-360. ATP-binding positions include 349–360 (QEYVDHSSRIFK), Ser-375, and Ser-398. Asp-439, Asp-453, and Asn-455 together coordinate Mg(2+). 1D-myo-inositol 1,3,4-trisphosphate-binding residues include Asn-455 and Ser-459.

It belongs to the ITPK1 family. Monomer. Mg(2+) is required as a cofactor. In terms of tissue distribution, expressed in roots, leaf vasculature, cauline leaves, flower buds and siliques.

It catalyses the reaction 1D-myo-inositol 1,3,4-trisphosphate + ATP = 1D-myo-inositol 1,3,4,5-tetrakisphosphate + ADP + H(+). The enzyme catalyses 1D-myo-inositol 1,3,4-trisphosphate + ATP = 1D-myo-inositol 1,3,4,6-tetrakisphosphate + ADP + H(+). Kinase that can phosphorylate the inositol polyphosphate Ins(1,3,4)P3 to form InsP4. Also phosphorylates a racemic mixture of Ins(1,4,6)P3 and Ins(3,4,6)P3 to form InsP4. Does not display inositol 3,4,5,6-tetrakisphosphate 1-kinase activity, but possesses inositol 1,4,5,6-tetrakisphosphate and inositol 1,3,4,5-tetrakisphosphate isomerase activity. Ins(1,3,4,6)P4 is an essential molecule in the hexakisphosphate (InsP6) pathway. The polypeptide is Inositol 1,3,4-trisphosphate 5/6-kinase 4 (ITPK4) (Arabidopsis thaliana (Mouse-ear cress)).